The following is a 476-amino-acid chain: Cardiolipin synthase (476 aa).

2 helical membrane passes run 2-22 (HLFINMIFLINIVFIISIIFI) and 31-51 (WAWILILTFLPILGFIIYILF). PLD phosphodiesterase domains are found at residues 207–234 (INYRNHRKILIIDSKVAFLGGFNIGDEY) and 389–416 (EKGFLHAKTIVADSSICSVGTANMDIRS). Residues His-212, Lys-214, Asp-219, His-394, Lys-396, and Asp-401 contribute to the active site.

The protein belongs to the phospholipase D family. Cardiolipin synthase subfamily.

Its subcellular location is the cell membrane. The catalysed reaction is 2 a 1,2-diacyl-sn-glycero-3-phospho-(1'-sn-glycerol) = a cardiolipin + glycerol. Catalyzes the reversible phosphatidyl group transfer from one phosphatidylglycerol molecule to another to form cardiolipin (CL) (diphosphatidylglycerol) and glycerol. The polypeptide is Cardiolipin synthase (cls) (Clostridium perfringens (strain 13 / Type A)).